The following is an 826-amino-acid chain: Arsenite oxidase subunit AioA (826 aa).

Residues Cys-22, Cys-25, and Cys-29 each coordinate [3Fe-4S] cluster. His-196, Glu-204, Arg-419, and His-423 together coordinate substrate.

Belongs to the prokaryotic molybdopterin-containing oxidoreductase family. In terms of assembly, heterodimer consisting of a large and a small subunit. Requires [3Fe-4S] cluster as cofactor. Mo-bis(molybdopterin guanine dinucleotide) is required as a cofactor.

It carries out the reaction 2 oxidized [azurin] + arsenite + H2O = 2 reduced [azurin] + arsenate + 3 H(+). Functionally, involved in the detoxification of arsenic. Oxidizes As(III)O3(3-) (arsenite) to the somewhat less toxic As(V)O4(3-) (arsenate). The sequence is that of Arsenite oxidase subunit AioA (aioA) from Herminiimonas arsenicoxydans.